The primary structure comprises 514 residues: MSVSKKPMVLVILDGYGYREEQQDNAIFSAKTPVMDALWANRPHTLIDASGLEVGLPDRQMGNSEVGHVNLGAGRIVYQDLTRLDVEIKDRAFFANPVLTGAVDKAKNAGKAVHIMGLLSAGGVHSHEDHIMAMVELAAERGAEKIYLHAFLDGRDTPPRSAESSLKKFEEKFAALGKGRVASIIGRYYAMDRDNRWDRVEKAYDLLTLAQGEFQADTAVAGLQAAYARDENDEFVKATVIRAEGQPDAAMEDGDALIFMNFRADRAREITRAFVNADFDGFARKKVVNVDFVMLTEYAADIKTAVAYPPASLVNTFGEWMAKNDKTQLRISETEKYAHVTFFFNGGVEESFKGEDRILINSPKVATYDLQPEMSSAELTEKLVAAIKSGKYDTIICNYPNGDMVGHTGVMEAAVKAVEALDHCVEEVAKAVESVGGQLLITADHGNAEQMRDPATGQAHTAHTNLPVPLIYVGDKNVKAVAGGKLSDIAPTMLSLMGMEIPQEMTGKPLFIVE.

2 residues coordinate Mn(2+): aspartate 14 and serine 64. Catalysis depends on serine 64, which acts as the Phosphoserine intermediate. Substrate contacts are provided by residues histidine 125, 155–156 (RD), arginine 187, arginine 193, 263–266 (RADR), and lysine 336. Mn(2+) is bound by residues aspartate 403, histidine 407, aspartate 444, histidine 445, and histidine 463.

Belongs to the BPG-independent phosphoglycerate mutase family. In terms of assembly, monomer. The cofactor is Mn(2+).

It carries out the reaction (2R)-2-phosphoglycerate = (2R)-3-phosphoglycerate. The protein operates within carbohydrate degradation; glycolysis; pyruvate from D-glyceraldehyde 3-phosphate: step 3/5. In terms of biological role, catalyzes the interconversion of 2-phosphoglycerate and 3-phosphoglycerate. This is 2,3-bisphosphoglycerate-independent phosphoglycerate mutase from Escherichia coli (strain ATCC 8739 / DSM 1576 / NBRC 3972 / NCIMB 8545 / WDCM 00012 / Crooks).